Here is a 441-residue protein sequence, read N- to C-terminus: G-protein coupled receptor family C group 5 member C (441 aa).

The first 22 residues, 1-22, serve as a signal peptide directing secretion; it reads MATHKTLLMCLGLPLFFPGALA. Residues 23-49 are Extracellular-facing; sequence QNHAPPGCSPDLDPLYYNLCDRSGAWG. A helical membrane pass occupies residues 50–70; sequence IVLEAVAGAGIITTFVLTIIL. Over 71–84 the chain is Cytoplasmic; it reads VASLPFVQDTKKRS. Residues 85 to 105 traverse the membrane as a helical segment; the sequence is LLGTQVFFLLGTLGLFCLVFA. Over 106–119 the chain is Extracellular; it reads CVVKPDFSTCASRR. A helical transmembrane segment spans residues 120 to 140; the sequence is FLFGVLFAICFSCLIAHTLSL. The Cytoplasmic portion of the chain corresponds to 141-154; it reads NFLARKNHGPRGWV. Residues 155–175 form a helical membrane-spanning segment; sequence IFTVALLLTLVEVIINTEWLI. Over 176–207 the chain is Extracellular; the sequence is ITLVRGGGQVSTPGNGSADWTVTSPCAIANMD. Asparagine 190 carries an N-linked (GlcNAc...) asparagine glycan. A helical membrane pass occupies residues 208–228; the sequence is FVMALIYVMLLLLAAFLGAWP. Residues 229 to 240 lie on the Cytoplasmic side of the membrane; it reads TLCGRFKRWRKH. Residues 241–261 form a helical membrane-spanning segment; the sequence is GVFVLLTTATSIAIWVVWIVM. Over 262 to 278 the chain is Extracellular; it reads YTYGNKQHHSPTWDDPT. The chain crosses the membrane as a helical span at residues 279-299; that stretch reads LAIALAANAWTFVFFYVIPEV. The Cytoplasmic segment spans residues 300–441; sequence SQVTKPSPEQ…DQSPKNKTRW (142 aa). Phosphoserine is present on residues serine 343, serine 382, serine 402, and serine 405. At tyrosine 413 the chain carries Phosphotyrosine. The interval 419–441 is disordered; sequence QVATPTKDGKISQDQSPKNKTRW. Position 422 is a phosphothreonine (threonine 422). The segment covering 430 to 441 has biased composition (polar residues); the sequence is SQDQSPKNKTRW. Serine 434 is modified (phosphoserine).

The protein belongs to the G-protein coupled receptor 3 family.

The protein localises to the cell membrane. In terms of biological role, this retinoic acid-inducible G-protein coupled receptor provide evidence for a possible interaction between retinoid and G-protein signaling pathways. The protein is G-protein coupled receptor family C group 5 member C (Gprc5c) of Rattus norvegicus (Rat).